The sequence spans 400 residues: Argininosuccinate synthase (400 aa).

Residues 6-14 (AYSGGLDTS) and Ala33 each bind ATP. Positions 84 and 89 each coordinate L-citrulline. Gly114 lines the ATP pocket. Residues Thr116, Asn120, and Asp121 each coordinate L-aspartate. Asn120 serves as a coordination point for L-citrulline. L-citrulline contacts are provided by Arg124, Ser173, Ser182, Glu258, and Tyr270.

Belongs to the argininosuccinate synthase family. Type 1 subfamily. As to quaternary structure, homotetramer.

The protein localises to the cytoplasm. The catalysed reaction is L-citrulline + L-aspartate + ATP = 2-(N(omega)-L-arginino)succinate + AMP + diphosphate + H(+). It functions in the pathway amino-acid biosynthesis; L-arginine biosynthesis; L-arginine from L-ornithine and carbamoyl phosphate: step 2/3. The polypeptide is Argininosuccinate synthase (Thermus thermophilus (strain ATCC BAA-163 / DSM 7039 / HB27)).